Reading from the N-terminus, the 290-residue chain is Elongation factor Ts (290 aa).

Residues T87–V90 are involved in Mg(2+) ion dislocation from EF-Tu.

It belongs to the EF-Ts family.

The protein localises to the cytoplasm. Associates with the EF-Tu.GDP complex and induces the exchange of GDP to GTP. It remains bound to the aminoacyl-tRNA.EF-Tu.GTP complex up to the GTP hydrolysis stage on the ribosome. This Treponema pallidum (strain Nichols) protein is Elongation factor Ts (tsf).